The chain runs to 255 residues: Aprataxin and PNK-like factor (255 aa).

The segment covering 1 to 11 (MSATDASTADS) has biased composition (low complexity). Disordered regions lie at residues 1 to 117 (MSAT…VSSS), 131 to 168 (RRNPAHRSAEAHPGDQDYRRPNFPAPPLGTPACPFGNA), and 195 to 255 (RLRQ…DDYD). 3 stretches are compositionally biased toward basic and acidic residues: residues 12–22 (GAKRKSSEDIT), 40–64 (KSEEPVASIKDETNPEVPMKIKAEP), and 137–150 (RSAEAHPGDQDYRR). PBZ-type zinc fingers lie at residues 121–142 (TSCRFGIRCYRRNPAHRSAEAH) and 161–182 (PACPFGNACYRRNPVHFQDYSH). Acidic residues predominate over residues 207 to 218 (DDSGTDEEDEPF). Over residues 221-230 (DNDRDADYRP) the composition is skewed to basic and acidic residues. The segment covering 234-244 (INEDEDDELEF) has biased composition (acidic residues).

Belongs to the APLF family.

Its function is as follows. Displays apurinic-apyrimidinic (AP) endonuclease and 3'-5' exonuclease activities in vitro. The chain is Aprataxin and PNK-like factor from Drosophila melanogaster (Fruit fly).